Reading from the N-terminus, the 152-residue chain is Histone H2B.9 (152 aa).

2 stretches are compositionally biased toward basic and acidic residues: residues 1 to 16 (MAPKAEKKPAAKKPAE) and 34 to 52 (EKRLPAGKGEKGGAGEGKK). Positions 1–59 (MAPKAEKKPAAKKPAEEEPAAEKAPAAGKKPKAEKRLPAGKGEKGGAGEGKKAGRKKGK) are disordered. N6-acetyllysine occurs at positions 7 and 35. A Glycyl lysine isopeptide (Lys-Gly) (interchain with G-Cter in ubiquitin) cross-link involves residue Lys-148.

Belongs to the histone H2B family. In terms of assembly, the nucleosome is a histone octamer containing two molecules each of H2A, H2B, H3 and H4 assembled in one H3-H4 heterotetramer and two H2A-H2B heterodimers. The octamer wraps approximately 147 bp of DNA. Post-translationally, can be acetylated to form H2BK6ac and H2BK33ac. In terms of processing, monoubiquitinated by BRE1 to form H2BK143ub1 and deubiquitinated by UBP26. Required for heterochromatic histone H3 di- and trimethylation at H3K4me. May give a specific tag for epigenetic transcriptional activation.

The protein localises to the nucleus. It is found in the chromosome. Functionally, core component of nucleosome. Nucleosomes wrap and compact DNA into chromatin, limiting DNA accessibility to the cellular machineries which require DNA as a template. Histones thereby play a central role in transcription regulation, DNA repair, DNA replication and chromosomal stability. DNA accessibility is regulated via a complex set of post-translational modifications of histones, also called histone code, and nucleosome remodeling. This Oryza sativa subsp. indica (Rice) protein is Histone H2B.9 (H2B.9).